The chain runs to 268 residues: Small ribosomal subunit protein eS1 (268 aa).

Positions 1–21 (MAVGKNKGLSKGGKKGGKKKV) are disordered.

The protein belongs to the eukaryotic ribosomal protein eS1 family. Component of the small ribosomal subunit. Mature ribosomes consist of a small (40S) and a large (60S) subunit. The 40S subunit contains about 33 different proteins and 1 molecule of RNA (18S). The 60S subunit contains about 49 different proteins and 3 molecules of RNA (28S, 5.8S and 5S).

It is found in the cytoplasm. Functionally, essential for oogenesis; required for late follicle cell development. This Drosophila persimilis (Fruit fly) protein is Small ribosomal subunit protein eS1.